Here is a 635-residue protein sequence, read N- to C-terminus: Membrane protein insertase YidC (635 aa).

Residues 8 to 28 form a helical membrane-spanning segment; it reads LILAMVLSALVMLVWSIFFAP. The interval 33–61 is disordered; it reads PAQDTPAASTQGTAQPEAGGPATPGAVPQ. Helical transmembrane passes span 396–416, 470–490, 528–548, and 564–584; these read MIGN…LLVF, LPVL…FVTI, SFLH…SMWM, and IFAW…SGLV. The segment at 615–635 is disordered; sequence IRSSLPSRAKAGDKGGDKGGK. Residues 624–635 are compositionally biased toward basic and acidic residues; the sequence is KAGDKGGDKGGK.

The protein belongs to the OXA1/ALB3/YidC family. Type 1 subfamily. As to quaternary structure, interacts with the Sec translocase complex via SecD. Specifically interacts with transmembrane segments of nascent integral membrane proteins during membrane integration.

The protein resides in the cell inner membrane. Functionally, required for the insertion and/or proper folding and/or complex formation of integral membrane proteins into the membrane. Involved in integration of membrane proteins that insert both dependently and independently of the Sec translocase complex, as well as at least some lipoproteins. Aids folding of multispanning membrane proteins. The polypeptide is Membrane protein insertase YidC (Paracoccus denitrificans (strain Pd 1222)).